The sequence spans 691 residues: DNA ligase (691 aa).

NAD(+) is bound by residues 41 to 45, 90 to 91, and E130; these read DAEYD and SL. K132 (N6-AMP-lysine intermediate) is an active-site residue. The NAD(+) site is built by R153, E190, K307, and K331. Zn(2+) contacts are provided by C425, C428, C443, and C449. In terms of domain architecture, BRCT spans 610–691; it reads APQGVLAGKT…LHQLLEGNTP (82 aa).

This sequence belongs to the NAD-dependent DNA ligase family. LigA subfamily. The cofactor is Mg(2+). It depends on Mn(2+) as a cofactor.

It catalyses the reaction NAD(+) + (deoxyribonucleotide)n-3'-hydroxyl + 5'-phospho-(deoxyribonucleotide)m = (deoxyribonucleotide)n+m + AMP + beta-nicotinamide D-nucleotide.. Functionally, DNA ligase that catalyzes the formation of phosphodiester linkages between 5'-phosphoryl and 3'-hydroxyl groups in double-stranded DNA using NAD as a coenzyme and as the energy source for the reaction. It is essential for DNA replication and repair of damaged DNA. The polypeptide is DNA ligase (Burkholderia ambifaria (strain ATCC BAA-244 / DSM 16087 / CCUG 44356 / LMG 19182 / AMMD) (Burkholderia cepacia (strain AMMD))).